The chain runs to 490 residues: Keratin, type II cytoskeletal 8 (490 aa).

Polar residues predominate over residues 1 to 27 (MSIRVTQKSYKMSTSGPRAFSSRSFTS). The tract at residues 1–48 (MSIRVTQKSYKMSTSGPRAFSSRSFTSGPGARISSSSFSRVGSSSSSF) is disordered. The head stretch occupies residues 1 to 96 (MSIRVTQKSY…DPNIQAVRTQ (96 aa)). Serine 9 carries the post-translational modification Phosphoserine; by PKC/PRKCE. Lysine 11 participates in a covalent cross-link: Glycyl lysine isopeptide (Lys-Gly) (interchain with G-Cter in SUMO2). Residues serine 13, serine 15, serine 21, and serine 22 each carry the phosphoserine modification. Arginine 23 carries the post-translational modification Omega-N-methylarginine. Phosphoserine; by PKC/PRKCE is present on serine 24. Threonine 26 carries the post-translational modification Phosphothreonine. Serine 27 carries the post-translational modification Phosphoserine. Arginine 32 is subject to Omega-N-methylarginine. Phosphoserine is present on residues serine 34, serine 37, and serine 39. Residues 34 to 48 (SSSSFSRVGSSSSSF) show a composition bias toward low complexity. Arginine 40 carries the omega-N-methylarginine modification. Serine 43, serine 44, and serine 47 each carry phosphoserine. Arginine 49 bears the Asymmetric dimethylarginine; alternate mark. Arginine 49 carries the post-translational modification Omega-N-methylarginine; alternate. Phosphoserine is present on serine 51. Position 80 is a phosphoserine; by MAPK (serine 80). The tract at residues 97 to 132 (EKEQIKSLNNKFASFIDKVRFLEQQNKMLETKWSLL) is coil 1A. One can recognise an IF rod domain in the interval 97–408 (EKEQIKSLNN…KLLEGEESRL (312 aa)). Lysine 107 is subject to N6-malonyllysine. Residues lysine 128 and lysine 136 each participate in a glycyl lysine isopeptide (Lys-Gly) (interchain with G-Cter in SUMO2) cross-link. Positions 133-149 (QQQKTSRSNMDNMFESY) are linker 1. The coil 1B stretch occupies residues 150–241 (INNLRRQLEA…QIHEEEIREL (92 aa)). Residue lysine 203 forms a Glycyl lysine isopeptide (Lys-Gly) (interchain with G-Cter in SUMO1); alternate linkage. Lysine 203 is covalently cross-linked (Glycyl lysine isopeptide (Lys-Gly) (interchain with G-Cter in SUMO2); alternate). Lysine 213 bears the N6-acetyllysine mark. The tract at residues 242–265 (QSQISDTSVVLSMDNSRSLDMDGI) is linker 12. Phosphoserine is present on residues serine 259 and serine 280. The segment at 266-403 (IAEVRAQYED…ITTYRKLLEG (138 aa)) is coil 2. Positions 267 to 387 (AEVRAQYEDI…REYQELMNVK (121 aa)) are necessary for interaction with PNN. A Glycyl lysine isopeptide (Lys-Gly) (interchain with G-Cter in SUMO2) cross-link involves residue lysine 291. A Glycyl lysine isopeptide (Lys-Gly) (interchain with G-Cter in SUMO2); alternate cross-link involves residue lysine 301. The residue at position 301 (lysine 301) is an N6-acetyllysine; alternate. Lysine 310 participates in a covalent cross-link: Glycyl lysine isopeptide (Lys-Gly) (interchain with G-Cter in SUMO2). Residue lysine 331 forms a Glycyl lysine isopeptide (Lys-Gly) (interchain with G-Cter in SUMO2); alternate linkage. Position 331 is an N6-acetyllysine; alternate (lysine 331). Serine 336 is modified (phosphoserine). Lysine 399 participates in a covalent cross-link: Glycyl lysine isopeptide (Lys-Gly) (interchain with G-Cter in SUMO2). The interval 404–490 (EESRLESGMQ…VSESSDVVSK (87 aa)) is tail. Residues serine 406, serine 410, serine 416, serine 423, serine 430, serine 432, and serine 438 each carry the phosphoserine modification. Lysine 479 is covalently cross-linked (Glycyl lysine isopeptide (Lys-Gly) (interchain with G-Cter in SUMO1); alternate). Lysine 479 is covalently cross-linked (Glycyl lysine isopeptide (Lys-Gly) (interchain with G-Cter in SUMO2); alternate). Residues serine 482, serine 484, serine 485, and serine 489 each carry the phosphoserine modification.

This sequence belongs to the intermediate filament family. As to quaternary structure, heterotetramer of two type I and two type II keratins. Forms a heterodimer with KRT18. Associates with KRT20. Interacts with PLEC isoform 1C, when in a heterodimer with KRT18. Interacts with PNN. When associated with KRT19, interacts with DMD. Interacts with TCHP. Interacts with APEX1. Interacts with GPER1. Interacts with EPPK1. Interacts with PKP1 and PKP2. In terms of processing, phosphorylation on serine residues is enhanced during EGF stimulation and mitosis. Ser-80 phosphorylation plays an important role in keratin filament reorganization. O-glycosylated. O-GlcNAcylation at multiple sites increases solubility, and decreases stability by inducing proteasomal degradation. Post-translationally, O-glycosylated (O-GlcNAcylated), in a cell cycle-dependent manner. Expressed in abundance in the epithelia of colon, bladder, ileum, and stomach, with lower expression observed in earskin (at protein level). Also expressed in pancreas, liver, dudenum and jejunum.

It localises to the cytoplasm. The protein localises to the nucleus. The protein resides in the nucleoplasm. It is found in the nucleus matrix. In terms of biological role, together with KRT19, helps to link the contractile apparatus to dystrophin at the costameres of striated muscle. The sequence is that of Keratin, type II cytoskeletal 8 (Krt8) from Mus musculus (Mouse).